A 179-amino-acid polypeptide reads, in one-letter code: ATP synthase subunit delta (179 aa).

It belongs to the ATPase delta chain family. As to quaternary structure, F-type ATPases have 2 components, F(1) - the catalytic core - and F(0) - the membrane proton channel. F(1) has five subunits: alpha(3), beta(3), gamma(1), delta(1), epsilon(1). F(0) has three main subunits: a(1), b(2) and c(10-14). The alpha and beta chains form an alternating ring which encloses part of the gamma chain. F(1) is attached to F(0) by a central stalk formed by the gamma and epsilon chains, while a peripheral stalk is formed by the delta and b chains.

It localises to the cell inner membrane. F(1)F(0) ATP synthase produces ATP from ADP in the presence of a proton or sodium gradient. F-type ATPases consist of two structural domains, F(1) containing the extramembraneous catalytic core and F(0) containing the membrane proton channel, linked together by a central stalk and a peripheral stalk. During catalysis, ATP synthesis in the catalytic domain of F(1) is coupled via a rotary mechanism of the central stalk subunits to proton translocation. Functionally, this protein is part of the stalk that links CF(0) to CF(1). It either transmits conformational changes from CF(0) to CF(1) or is implicated in proton conduction. This chain is ATP synthase subunit delta, found in Burkholderia thailandensis (strain ATCC 700388 / DSM 13276 / CCUG 48851 / CIP 106301 / E264).